The following is a 322-amino-acid chain: GTP 3',8-cyclase (322 aa).

In terms of domain architecture, Radical SAM core spans Ser-5–Lys-217. Position 14 (Arg-14) interacts with GTP. Residues Cys-21 and Cys-25 each coordinate [4Fe-4S] cluster. Position 27 (Tyr-27) interacts with S-adenosyl-L-methionine. Cys-28 is a [4Fe-4S] cluster binding site. Arg-64 lines the GTP pocket. Position 68 (Gly-68) interacts with S-adenosyl-L-methionine. Thr-95 contributes to the GTP binding site. Ser-119 is a binding site for S-adenosyl-L-methionine. Position 155 (Lys-155) interacts with GTP. Met-189 contacts S-adenosyl-L-methionine. Positions 249 and 252 each coordinate [4Fe-4S] cluster. Arg-254–Arg-256 is a GTP binding site. Cys-266 serves as a coordination point for [4Fe-4S] cluster.

It belongs to the radical SAM superfamily. MoaA family. Monomer and homodimer. Requires [4Fe-4S] cluster as cofactor.

It carries out the reaction GTP + AH2 + S-adenosyl-L-methionine = (8S)-3',8-cyclo-7,8-dihydroguanosine 5'-triphosphate + 5'-deoxyadenosine + L-methionine + A + H(+). Its pathway is cofactor biosynthesis; molybdopterin biosynthesis. Its function is as follows. Catalyzes the cyclization of GTP to (8S)-3',8-cyclo-7,8-dihydroguanosine 5'-triphosphate. This is GTP 3',8-cyclase from Campylobacter fetus subsp. fetus (strain 82-40).